Reading from the N-terminus, the 74-residue chain is uncharacterized protein (74 aa).

This is an uncharacterized protein from Saccharolobus islandicus (Sulfolobus islandicus).